Reading from the N-terminus, the 469-residue chain is Adenosylhomocysteinase (469 aa).

Threonine 63, aspartate 139, and glutamate 164 together coordinate substrate. Position 165 to 167 (165 to 167) interacts with NAD(+); it reads TTT. Residues lysine 194 and aspartate 198 each coordinate substrate. Residues asparagine 199, 228–233, glutamate 251, asparagine 300, 321–323, and asparagine 375 contribute to the NAD(+) site; these read GYGDVG and IGH.

It belongs to the adenosylhomocysteinase family. NAD(+) serves as cofactor.

It localises to the cytoplasm. It carries out the reaction S-adenosyl-L-homocysteine + H2O = L-homocysteine + adenosine. Its pathway is amino-acid biosynthesis; L-homocysteine biosynthesis; L-homocysteine from S-adenosyl-L-homocysteine: step 1/1. In terms of biological role, may play a key role in the regulation of the intracellular concentration of adenosylhomocysteine. This Pseudomonas syringae pv. syringae (strain B728a) protein is Adenosylhomocysteinase.